Consider the following 487-residue polypeptide: 2-aminomuconic semialdehyde dehydrogenase (487 aa).

231-236 (GSQPTA) serves as a coordination point for NAD(+). Glutamate 253 functions as the Proton acceptor in the catalytic mechanism. Cysteine 287 (nucleophile) is an active-site residue.

The protein belongs to the aldehyde dehydrogenase family.

The protein localises to the cytoplasm. The enzyme catalyses 2-aminomuconate 6-semialdehyde + NAD(+) + H2O = (2Z,4E)-2-aminomuconate + NADH + 2 H(+). It participates in amino-acid degradation; L-kynurenine degradation. Its function is as follows. Catalyzes the NAD-dependent oxidation of 2-aminomuconic semialdehyde of the kynurenine metabolic pathway in L-tryptophan degradation. This is 2-aminomuconic semialdehyde dehydrogenase (ALDH8A1) from Bos taurus (Bovine).